A 461-amino-acid polypeptide reads, in one-letter code: Phosphomethylpyrimidine synthase (461 aa).

Residues Asn80, Met109, Tyr138, His173, 193-195, 234-237, and Glu273 each bind substrate; these read SRG and DGLR. Position 277 (His277) interacts with Zn(2+). Tyr300 contributes to the substrate binding site. His341 contributes to the Zn(2+) binding site. Residues Cys421, Cys424, and Cys429 each coordinate [4Fe-4S] cluster.

It belongs to the ThiC family. [4Fe-4S] cluster is required as a cofactor.

It carries out the reaction 5-amino-1-(5-phospho-beta-D-ribosyl)imidazole + S-adenosyl-L-methionine = 4-amino-2-methyl-5-(phosphooxymethyl)pyrimidine + CO + 5'-deoxyadenosine + formate + L-methionine + 3 H(+). It participates in cofactor biosynthesis; thiamine diphosphate biosynthesis. Catalyzes the synthesis of the hydroxymethylpyrimidine phosphate (HMP-P) moiety of thiamine from aminoimidazole ribotide (AIR) in a radical S-adenosyl-L-methionine (SAM)-dependent reaction. The polypeptide is Phosphomethylpyrimidine synthase (Solibacter usitatus (strain Ellin6076)).